We begin with the raw amino-acid sequence, 491 residues long: UDP-N-acetylmuramate--L-alanine ligase (491 aa).

Residue 126–132 (GTHGKTT) coordinates ATP.

It belongs to the MurCDEF family.

The protein localises to the cytoplasm. It carries out the reaction UDP-N-acetyl-alpha-D-muramate + L-alanine + ATP = UDP-N-acetyl-alpha-D-muramoyl-L-alanine + ADP + phosphate + H(+). Its pathway is cell wall biogenesis; peptidoglycan biosynthesis. Cell wall formation. In Escherichia coli (strain SE11), this protein is UDP-N-acetylmuramate--L-alanine ligase.